Reading from the N-terminus, the 607-residue chain is Elongation factor 4 (607 aa).

Positions E11–E193 constitute a tr-type G domain. GTP is bound by residues D23 to T28 and N140 to D143.

The protein belongs to the TRAFAC class translation factor GTPase superfamily. Classic translation factor GTPase family. LepA subfamily.

The protein resides in the cell membrane. The catalysed reaction is GTP + H2O = GDP + phosphate + H(+). Functionally, required for accurate and efficient protein synthesis under certain stress conditions. May act as a fidelity factor of the translation reaction, by catalyzing a one-codon backward translocation of tRNAs on improperly translocated ribosomes. Back-translocation proceeds from a post-translocation (POST) complex to a pre-translocation (PRE) complex, thus giving elongation factor G a second chance to translocate the tRNAs correctly. Binds to ribosomes in a GTP-dependent manner. In Staphylococcus haemolyticus (strain JCSC1435), this protein is Elongation factor 4.